The primary structure comprises 394 residues: 1-deoxy-D-xylulose 5-phosphate reductoisomerase (394 aa).

Residues T14, G15, S16, I17, G40, and N128 each contribute to the NADPH site. K129 contributes to the 1-deoxy-D-xylulose 5-phosphate binding site. Residue E130 participates in NADPH binding. Position 154 (D154) interacts with Mn(2+). Residues S155, E156, S180, and H203 each coordinate 1-deoxy-D-xylulose 5-phosphate. E156 contributes to the Mn(2+) binding site. G209 serves as a coordination point for NADPH. The 1-deoxy-D-xylulose 5-phosphate site is built by S216, N221, K222, and E225. E225 is a Mn(2+) binding site.

The protein belongs to the DXR family. Requires Mg(2+) as cofactor. The cofactor is Mn(2+).

It catalyses the reaction 2-C-methyl-D-erythritol 4-phosphate + NADP(+) = 1-deoxy-D-xylulose 5-phosphate + NADPH + H(+). The protein operates within isoprenoid biosynthesis; isopentenyl diphosphate biosynthesis via DXP pathway; isopentenyl diphosphate from 1-deoxy-D-xylulose 5-phosphate: step 1/6. Catalyzes the NADPH-dependent rearrangement and reduction of 1-deoxy-D-xylulose-5-phosphate (DXP) to 2-C-methyl-D-erythritol 4-phosphate (MEP). The protein is 1-deoxy-D-xylulose 5-phosphate reductoisomerase of Xylella fastidiosa (strain M23).